Here is a 339-residue protein sequence, read N- to C-terminus: Ketol-acid reductoisomerase (NADP(+)) (339 aa).

The KARI N-terminal Rossmann domain maps to 1 to 182; that stretch reads MRVYYDRDAD…GGGRSGVIET (182 aa). Residues 24 to 27, Arg48, Ser51, Thr53, and 83 to 86 each bind NADP(+); these read YGSQ and DELQ. Residue His108 is part of the active site. Residue Gly134 coordinates NADP(+). The 146-residue stretch at 183-328 folds into the KARI C-terminal knotted domain; that stretch reads NFREECETDL…GRLRAMMPWI (146 aa). Residues Asp191, Glu195, Glu227, and Glu231 each coordinate Mg(2+). Residue Ser252 participates in substrate binding.

This sequence belongs to the ketol-acid reductoisomerase family. Requires Mg(2+) as cofactor.

The enzyme catalyses (2R)-2,3-dihydroxy-3-methylbutanoate + NADP(+) = (2S)-2-acetolactate + NADPH + H(+). The catalysed reaction is (2R,3R)-2,3-dihydroxy-3-methylpentanoate + NADP(+) = (S)-2-ethyl-2-hydroxy-3-oxobutanoate + NADPH + H(+). It functions in the pathway amino-acid biosynthesis; L-isoleucine biosynthesis; L-isoleucine from 2-oxobutanoate: step 2/4. It participates in amino-acid biosynthesis; L-valine biosynthesis; L-valine from pyruvate: step 2/4. Involved in the biosynthesis of branched-chain amino acids (BCAA). Catalyzes an alkyl-migration followed by a ketol-acid reduction of (S)-2-acetolactate (S2AL) to yield (R)-2,3-dihydroxy-isovalerate. In the isomerase reaction, S2AL is rearranged via a Mg-dependent methyl migration to produce 3-hydroxy-3-methyl-2-ketobutyrate (HMKB). In the reductase reaction, this 2-ketoacid undergoes a metal-dependent reduction by NADPH to yield (R)-2,3-dihydroxy-isovalerate. The protein is Ketol-acid reductoisomerase (NADP(+)) of Phenylobacterium zucineum (strain HLK1).